Consider the following 308-residue polypeptide: Pseudouridine-5'-phosphate glycosidase (308 aa).

The active-site Proton donor is the E29. K90 and V110 together coordinate substrate. Residue D142 coordinates Mn(2+). 144-146 (SSD) is a substrate binding site. K163 serves as the catalytic Nucleophile.

This sequence belongs to the pseudouridine-5'-phosphate glycosidase family. In terms of assembly, homotrimer. The cofactor is Mn(2+).

The enzyme catalyses D-ribose 5-phosphate + uracil = psi-UMP + H2O. In terms of biological role, catalyzes the reversible cleavage of pseudouridine 5'-phosphate (PsiMP) to ribose 5-phosphate and uracil. Functions biologically in the cleavage direction, as part of a pseudouridine degradation pathway. The polypeptide is Pseudouridine-5'-phosphate glycosidase (Serratia proteamaculans (strain 568)).